Reading from the N-terminus, the 1043-residue chain is Unconventional myosin-Ia (1043 aa).

The region spanning 8–694 is the Myosin motor domain; it reads VGVEDLVLLE…TLFYLEEQRR (687 aa). Residue 101-108 coordinates ATP; it reads GESGAGKT. The segment at 571 to 593 is actin-binding; the sequence is VTTLMKNLYSKNPNYIRCIKPNE. IQ domains lie at 697–719, 720–742, and 743–772; these read LQQL…HYQL, MRKS…HYRK, and MKAS…SGAA. A TH1 domain is found at 858 to 1042; it reads KASYPQSVPI…KGSRCLEVTV (185 aa).

This sequence belongs to the TRAFAC class myosin-kinesin ATPase superfamily. Myosin family. Post-translationally, phosphorylated by ALPK1.

Functionally, involved in directing the movement of organelles along actin filaments. The polypeptide is Unconventional myosin-Ia (MYO1A) (Bos taurus (Bovine)).